The sequence spans 498 residues: Probable cytosol aminopeptidase (498 aa).

Residues K263 and D268 each coordinate Mn(2+). K275 is a catalytic residue. Mn(2+) is bound by residues D286, D345, and E347. R349 is a catalytic residue.

It belongs to the peptidase M17 family. The cofactor is Mn(2+).

It is found in the cytoplasm. The catalysed reaction is Release of an N-terminal amino acid, Xaa-|-Yaa-, in which Xaa is preferably Leu, but may be other amino acids including Pro although not Arg or Lys, and Yaa may be Pro. Amino acid amides and methyl esters are also readily hydrolyzed, but rates on arylamides are exceedingly low.. It carries out the reaction Release of an N-terminal amino acid, preferentially leucine, but not glutamic or aspartic acids.. In terms of biological role, presumably involved in the processing and regular turnover of intracellular proteins. Catalyzes the removal of unsubstituted N-terminal amino acids from various peptides. The chain is Probable cytosol aminopeptidase from Rhodopseudomonas palustris (strain BisA53).